A 351-amino-acid polypeptide reads, in one-letter code: NADP-dependent isopropanol dehydrogenase (351 aa).

Zn(2+) contacts are provided by cysteine 37, histidine 59, glutamate 60, and aspartate 150. Residues 175 to 178 (IGAV), 198 to 200 (GSR), tyrosine 218, 265 to 267 (INY), and lysine 340 contribute to the NADP(+) site.

Belongs to the zinc-containing alcohol dehydrogenase family. In terms of assembly, homotetramer. Requires Zn(2+) as cofactor.

It carries out the reaction propan-2-ol + NADP(+) = acetone + NADPH + H(+). Alcohol dehydrogenase with a preference for medium chain secondary alcohols, such as 2-butanol and isopropanol. Has very low activity with primary alcohols, such as ethanol. Under physiological conditions, the enzyme reduces aldehydes and 2-ketones to produce secondary alcohols. Is active with acetaldehyde and propionaldehyde. The chain is NADP-dependent isopropanol dehydrogenase (adh) from Clostridium beijerinckii (Clostridium MP).